Reading from the N-terminus, the 468-residue chain is Argininosuccinate lyase (468 aa).

This sequence belongs to the lyase 1 family. Argininosuccinate lyase subfamily.

Its subcellular location is the cytoplasm. It catalyses the reaction 2-(N(omega)-L-arginino)succinate = fumarate + L-arginine. Its pathway is amino-acid biosynthesis; L-arginine biosynthesis; L-arginine from L-ornithine and carbamoyl phosphate: step 3/3. In Paraburkholderia xenovorans (strain LB400), this protein is Argininosuccinate lyase.